Consider the following 131-residue polypeptide: MTKKTIYFICTGNSCRSQMAEGWAKQILADDWNVYSAGIETHGVNPKAIEAMKEVGIDISNHTSDLIDNNIIKNSNLVVTLCSDADVNCPSLPTNVKKEHWGFDDPAGKPWSEFQRVRDEIKIAIENFKSR.

Residues Cys10, Cys82, and Cys89 each act as nucleophile in the active site. Cystine bridges form between Cys10–Cys82 and Cys82–Cys89.

Belongs to the low molecular weight phosphotyrosine protein phosphatase family. Thioredoxin-coupled ArsC subfamily.

The protein resides in the cytoplasm. The catalysed reaction is arsenate + [thioredoxin]-dithiol + H(+) = arsenite + [thioredoxin]-disulfide + H2O. Catalyzes the reduction of arsenate [As(V)] to arsenite [As(III)]. The protein is Arsenate reductase of Staphylococcus aureus (strain COL).